The following is a 126-amino-acid chain: Histone H2B type 1-M (126 aa).

The segment at 1 to 36 is disordered; the sequence is MPEPVKSAPVPKKGSKKAINKAQKKDGKKRKRSRKE. At Pro-2 the chain carries N-acetylproline. Glu-3 carries the ADP-ribosyl glutamic acid modification. Lys-6 carries the N6-(2-hydroxyisobutyryl)lysine; alternate modification. Lys-6 carries the post-translational modification N6-(beta-hydroxybutyryl)lysine; alternate. Lys-6 carries the N6-acetyllysine; alternate modification. Residue Lys-6 is modified to N6-butyryllysine; alternate. Lys-6 carries the N6-crotonyllysine; alternate modification. Lys-6 is subject to N6-lactoyllysine; alternate. Residue Lys-6 forms a Glycyl lysine isopeptide (Lys-Gly) (interchain with G-Cter in SUMO2); alternate linkage. ADP-ribosylserine is present on Ser-7. Lys-12 carries the post-translational modification N6-(beta-hydroxybutyryl)lysine; alternate. An N6-acetyllysine; alternate mark is found at Lys-12 and Lys-13. N6-crotonyllysine; alternate occurs at positions 12 and 13. Lys-12 carries the post-translational modification N6-lactoyllysine; alternate. An N6-(2-hydroxyisobutyryl)lysine; alternate modification is found at Lys-13. A Phosphoserine; by STK4/MST1 modification is found at Ser-15. An N6-acetyllysine; alternate mark is found at Lys-16, Lys-17, Lys-21, and Lys-24. Lys-16, Lys-17, Lys-21, and Lys-24 each carry N6-crotonyllysine; alternate. N6-lactoyllysine; alternate is present on residues Lys-16, Lys-17, Lys-21, and Lys-24. Residues Lys-17 and Lys-21 each carry the N6-(beta-hydroxybutyryl)lysine; alternate modification. An N6-glutaryllysine; alternate modification is found at Lys-17. Residues Lys-21 and Lys-24 each carry the N6-(2-hydroxyisobutyryl)lysine; alternate modification. Residue Lys-21 is modified to N6-butyryllysine; alternate. A Glycyl lysine isopeptide (Lys-Gly) (interchain with G-Cter in SUMO2); alternate cross-link involves residue Lys-21. Lys-25 carries the N6-(2-hydroxyisobutyryl)lysine modification. Position 35 is an N6-(2-hydroxyisobutyryl)lysine; alternate (Lys-35). Residue Lys-35 is modified to N6-(beta-hydroxybutyryl)lysine; alternate. Position 35 is an N6-crotonyllysine; alternate (Lys-35). Position 35 is an N6-glutaryllysine; alternate (Lys-35). Lys-35 carries the post-translational modification N6-succinyllysine; alternate. A Glycyl lysine isopeptide (Lys-Gly) (interchain with G-Cter in ubiquitin); alternate cross-link involves residue Lys-35. At Glu-36 the chain carries PolyADP-ribosyl glutamic acid. Ser-37 carries the phosphoserine; by AMPK modification. N6-(2-hydroxyisobutyryl)lysine; alternate occurs at positions 44, 47, and 58. N6-lactoyllysine; alternate is present on Lys-44. Residues Lys-44 and Lys-47 each carry the N6-glutaryllysine; alternate modification. Lys-47 carries the N6-methyllysine; alternate modification. An N6,N6-dimethyllysine; alternate modification is found at Lys-58. At Arg-80 the chain carries Dimethylated arginine. Residue Lys-86 is modified to N6-(2-hydroxyisobutyryl)lysine; alternate. An N6-(beta-hydroxybutyryl)lysine; alternate modification is found at Lys-86. An N6-acetyllysine; alternate modification is found at Lys-86. Lys-86 carries the post-translational modification N6-lactoyllysine; alternate. Lys-86 carries the post-translational modification N6,N6,N6-trimethyllysine; alternate. Omega-N-methylarginine is present on residues Arg-87 and Arg-93. At Lys-109 the chain carries N6-(2-hydroxyisobutyryl)lysine; alternate. Lys-109 bears the N6-lactoyllysine; alternate mark. Lys-109 carries the N6-glutaryllysine; alternate modification. The residue at position 109 (Lys-109) is an N6-methyllysine; alternate. A glycan (O-linked (GlcNAc) serine) is linked at Ser-113. The residue at position 116 (Thr-116) is a Phosphothreonine. N6-(2-hydroxyisobutyryl)lysine; alternate is present on residues Lys-117 and Lys-121. 2 positions are modified to N6-(beta-hydroxybutyryl)lysine; alternate: Lys-117 and Lys-121. N6-lactoyllysine; alternate occurs at positions 117 and 121. 2 positions are modified to N6-glutaryllysine; alternate: Lys-117 and Lys-121. Residues Lys-117 and Lys-121 each carry the N6-succinyllysine; alternate modification. The residue at position 117 (Lys-117) is an N6-malonyllysine; alternate. N6-methylated lysine; alternate is present on Lys-117. Lys-121 participates in a covalent cross-link: Glycyl lysine isopeptide (Lys-Gly) (interchain with G-Cter in ubiquitin); alternate.

It belongs to the histone H2B family. In terms of assembly, the nucleosome is a histone octamer containing two molecules each of H2A, H2B, H3 and H4 assembled in one H3-H4 heterotetramer and two H2A-H2B heterodimers. The octamer wraps approximately 147 bp of DNA. In terms of processing, monoubiquitination at Lys-35 (H2BK34Ub) by the MSL1/MSL2 dimer is required for histone H3 'Lys-4' (H3K4me) and 'Lys-79' (H3K79me) methylation and transcription activation at specific gene loci, such as HOXA9 and MEIS1 loci. Similarly, monoubiquitination at Lys-121 (H2BK120Ub) by the RNF20/40 complex gives a specific tag for epigenetic transcriptional activation and is also prerequisite for histone H3 'Lys-4' and 'Lys-79' methylation. It also functions cooperatively with the FACT dimer to stimulate elongation by RNA polymerase II. H2BK120Ub also acts as a regulator of mRNA splicing: deubiquitination by USP49 is required for efficient cotranscriptional splicing of a large set of exons. Post-translationally, phosphorylation at Ser-37 (H2BS36ph) by AMPK in response to stress promotes transcription. Phosphorylated on Ser-15 (H2BS14ph) by STK4/MST1 during apoptosis; which facilitates apoptotic chromatin condensation. Also phosphorylated on Ser-15 in response to DNA double strand breaks (DSBs), and in correlation with somatic hypermutation and immunoglobulin class-switch recombination. GlcNAcylation at Ser-113 promotes monoubiquitination of Lys-121. It fluctuates in response to extracellular glucose, and associates with transcribed genes. In terms of processing, ADP-ribosylated by PARP1 or PARP2 on Ser-7 (H2BS6ADPr) in response to DNA damage. H2BS6ADPr promotes recruitment of CHD1L. Mono-ADP-ribosylated on Glu-3 (H2BE2ADPr) by PARP3 in response to single-strand breaks. Poly ADP-ribosylation on Glu-36 (H2BE35ADPr) by PARP1 regulates adipogenesis: it inhibits phosphorylation at Ser-37 (H2BS36ph), thereby blocking expression of pro-adipogenetic genes. Post-translationally, crotonylation (Kcr) is specifically present in male germ cells and marks testis-specific genes in post-meiotic cells, including X-linked genes that escape sex chromosome inactivation in haploid cells. Crotonylation marks active promoters and enhancers and confers resistance to transcriptional repressors. It is also associated with post-meiotically activated genes on autosomes. Lactylated in macrophages by EP300/P300 by using lactoyl-CoA directly derived from endogenous or exogenous lactate, leading to stimulates gene transcription.

The protein localises to the nucleus. The protein resides in the chromosome. Its function is as follows. Core component of nucleosome. Nucleosomes wrap and compact DNA into chromatin, limiting DNA accessibility to the cellular machineries which require DNA as a template. Histones thereby play a central role in transcription regulation, DNA repair, DNA replication and chromosomal stability. DNA accessibility is regulated via a complex set of post-translational modifications of histones, also called histone code, and nucleosome remodeling. The chain is Histone H2B type 1-M from Homo sapiens (Human).